The following is a 74-amino-acid chain: Ubiquitin-like protein FUBI (74 aa).

The protein belongs to the ubiquitin family.

The protein is Ubiquitin-like protein FUBI (FAU) of Bos taurus (Bovine).